A 1068-amino-acid chain; its full sequence is Carbamoyl phosphate synthase large chain (1068 aa).

The carboxyphosphate synthetic domain stretch occupies residues Met-1–Glu-401. Residues Arg-129, Arg-169, Gly-175, Gly-176, Lys-208, Val-210, Glu-215, Gly-241, Ile-242, His-243, Gln-284, and Glu-298 each contribute to the ATP site. An ATP-grasp 1 domain is found at Arg-133 to Leu-327. Gln-284, Glu-298, and Asn-300 together coordinate Mg(2+). Mn(2+) contacts are provided by Gln-284, Glu-298, and Asn-300. An oligomerization domain region spans residues Ile-402 to Val-549. Residues Glu-550–Asn-932 form a carbamoyl phosphate synthetic domain region. Positions Asp-674–Leu-864 constitute an ATP-grasp 2 domain. ATP-binding residues include Arg-710, Lys-749, Leu-751, Glu-755, Gly-780, Val-781, His-782, Ser-783, Gln-823, and Glu-835. Gln-823, Glu-835, and Asn-837 together coordinate Mg(2+). Mn(2+)-binding residues include Gln-823, Glu-835, and Asn-837. Positions Met-933 to Asn-1068 constitute an MGS-like domain. The segment at Met-933–Asn-1068 is allosteric domain.

Belongs to the CarB family. In terms of assembly, composed of two chains; the small (or glutamine) chain promotes the hydrolysis of glutamine to ammonia, which is used by the large (or ammonia) chain to synthesize carbamoyl phosphate. Tetramer of heterodimers (alpha,beta)4. It depends on Mg(2+) as a cofactor. Mn(2+) is required as a cofactor.

It carries out the reaction hydrogencarbonate + L-glutamine + 2 ATP + H2O = carbamoyl phosphate + L-glutamate + 2 ADP + phosphate + 2 H(+). The catalysed reaction is hydrogencarbonate + NH4(+) + 2 ATP = carbamoyl phosphate + 2 ADP + phosphate + 2 H(+). The protein operates within amino-acid biosynthesis; L-arginine biosynthesis; carbamoyl phosphate from bicarbonate: step 1/1. Its pathway is pyrimidine metabolism; UMP biosynthesis via de novo pathway; (S)-dihydroorotate from bicarbonate: step 1/3. Large subunit of the glutamine-dependent carbamoyl phosphate synthetase (CPSase). CPSase catalyzes the formation of carbamoyl phosphate from the ammonia moiety of glutamine, carbonate, and phosphate donated by ATP, constituting the first step of 2 biosynthetic pathways, one leading to arginine and/or urea and the other to pyrimidine nucleotides. The large subunit (synthetase) binds the substrates ammonia (free or transferred from glutamine from the small subunit), hydrogencarbonate and ATP and carries out an ATP-coupled ligase reaction, activating hydrogencarbonate by forming carboxy phosphate which reacts with ammonia to form carbamoyl phosphate. This chain is Carbamoyl phosphate synthase large chain, found in Clostridium botulinum (strain Kyoto / Type A2).